Reading from the N-terminus, the 176-residue chain is Large ribosomal subunit protein uL10 (176 aa).

The protein belongs to the universal ribosomal protein uL10 family. As to quaternary structure, part of the ribosomal stalk of the 50S ribosomal subunit. The N-terminus interacts with L11 and the large rRNA to form the base of the stalk. The C-terminus forms an elongated spine to which L12 dimers bind in a sequential fashion forming a multimeric L10(L12)X complex.

Forms part of the ribosomal stalk, playing a central role in the interaction of the ribosome with GTP-bound translation factors. In Thioalkalivibrio sulfidiphilus (strain HL-EbGR7), this protein is Large ribosomal subunit protein uL10.